The following is a 348-amino-acid chain: Phosphoribosylformylglycinamidine cyclo-ligase (348 aa).

Belongs to the AIR synthase family.

The protein localises to the cytoplasm. It catalyses the reaction 2-formamido-N(1)-(5-O-phospho-beta-D-ribosyl)acetamidine + ATP = 5-amino-1-(5-phospho-beta-D-ribosyl)imidazole + ADP + phosphate + H(+). It functions in the pathway purine metabolism; IMP biosynthesis via de novo pathway; 5-amino-1-(5-phospho-D-ribosyl)imidazole from N(2)-formyl-N(1)-(5-phospho-D-ribosyl)glycinamide: step 2/2. This chain is Phosphoribosylformylglycinamidine cyclo-ligase, found in Citrifermentans bemidjiense (strain ATCC BAA-1014 / DSM 16622 / JCM 12645 / Bem) (Geobacter bemidjiensis).